The following is an 83-amino-acid chain: Cytochrome c5 (83 aa).

Positions 15, 18, 19, and 59 each coordinate heme c. C65 and C68 form a disulfide bridge.

This sequence belongs to the cytochrome c family. Homodimer. Binds 1 heme c group covalently per subunit.

In terms of biological role, it is unreactive with cytochrome c reductase or oxidase. The protein is Cytochrome c5 of Azotobacter vinelandii.